The following is a 525-amino-acid chain: Bifunctional pantoate ligase/cytidylate kinase (525 aa).

A pantoate--beta-alanine ligase region spans residues 1 to 292 (MDNVPIIRTV…VGSARLIDNM (292 aa)). Position 44 to 51 (44 to 51 (MGALHAGH)) interacts with ATP. Residue His51 is the Proton donor of the active site. Residue Gln75 participates in (R)-pantoate binding. Gln75 serves as a coordination point for beta-alanine. 162–165 (GQKD) is a binding site for ATP. Gln168 is a (R)-pantoate binding site. Residues Ile191 and 199–202 (LSSR) each bind ATP. The interval 293-525 (LLDARLPILA…LYQERFPDRA (233 aa)) is cytidylate kinase.

It in the N-terminal section; belongs to the pantothenate synthetase family. The protein in the C-terminal section; belongs to the cytidylate kinase family. Type 1 subfamily.

It is found in the cytoplasm. It carries out the reaction (R)-pantoate + beta-alanine + ATP = (R)-pantothenate + AMP + diphosphate + H(+). The catalysed reaction is CMP + ATP = CDP + ADP. The enzyme catalyses dCMP + ATP = dCDP + ADP. It functions in the pathway cofactor biosynthesis; (R)-pantothenate biosynthesis; (R)-pantothenate from (R)-pantoate and beta-alanine: step 1/1. In terms of biological role, catalyzes the condensation of pantoate with beta-alanine in an ATP-dependent reaction via a pantoyl-adenylate intermediate. Its function is as follows. Catalyzes the transfer of a phosphate group from ATP to either CMP or dCMP to form CDP or dCDP and ADP, respectively. In Acaryochloris marina (strain MBIC 11017), this protein is Bifunctional pantoate ligase/cytidylate kinase.